The primary structure comprises 448 residues: C4-dicarboxylate transport protein (448 aa).

9 helical membrane passes run 13–33 (SLYAQVIFAVTIGVLLGHFYP), 49–69 (LIKMIIAPIIFCTVVVGIAGM), 81–101 (LALLYFEVMSTLALVVGLLVV), 149–169 (AFAKGEILQVLLFSVLFGFAL), 193–213 (IVGIIMKVAPIGAFGAMAFTI), 227–247 (LMGAFYLTCLIFVFGVLGIVS), 294–314 (VVGLVIPTGYSFNLDGTSIYL), 336–356 (TLLAVLLLTSKGAAGVTGSGF), and 357–377 (IVLAATLSAVGGVPVAGLALI).

It belongs to the dicarboxylate/amino acid:cation symporter (DAACS) (TC 2.A.23) family.

It is found in the cell inner membrane. In terms of biological role, responsible for the transport of dicarboxylates such as succinate, fumarate, and malate from the periplasm across the membrane. This Albidiferax ferrireducens (strain ATCC BAA-621 / DSM 15236 / T118) (Rhodoferax ferrireducens) protein is C4-dicarboxylate transport protein.